Here is a 180-residue protein sequence, read N- to C-terminus: ATP-dependent protease subunit HslV (180 aa).

Thr8 is a catalytic residue. The Na(+) site is built by Ala165, Cys168, and Thr171.

Belongs to the peptidase T1B family. HslV subfamily. A double ring-shaped homohexamer of HslV is capped on each side by a ring-shaped HslU homohexamer. The assembly of the HslU/HslV complex is dependent on binding of ATP.

It is found in the cytoplasm. It catalyses the reaction ATP-dependent cleavage of peptide bonds with broad specificity.. Allosterically activated by HslU binding. Its function is as follows. Protease subunit of a proteasome-like degradation complex believed to be a general protein degrading machinery. In Staphylococcus epidermidis (strain ATCC 12228 / FDA PCI 1200), this protein is ATP-dependent protease subunit HslV.